A 349-amino-acid polypeptide reads, in one-letter code: GATA zinc finger domain-containing protein 24 (349 aa).

2 stretches are compositionally biased toward low complexity: residues 95 to 169 (NINR…VNKN) and 177 to 195 (NKSC…NNNS). 2 disordered regions span residues 95–227 (NINR…PVIK) and 250–294 (DYDY…KPVQ). Basic and acidic residues predominate over residues 196 to 212 (ENKEKNNINNNNEKENN). A compositionally biased stretch (low complexity) spans 257–272 (SNESSSPTLSASTLSS). Residues 278–289 (KVLKRGRGRPSK) are compositionally biased toward basic residues. The segment at 295–323 (CFSCFRSNTPEWRKGKDKDGNVIDLCNAC) adopts a GATA-type zinc-finger fold.

The polypeptide is GATA zinc finger domain-containing protein 24 (gtaX) (Dictyostelium discoideum (Social amoeba)).